A 227-amino-acid chain; its full sequence is ATP synthase F(0) complex subunit a (227 aa).

6 helical membrane passes run 12–32, 69–89, 98–118, 139–159, 170–190, and 196–216; these read PCLL…LLLP, WALL…LGLL, QLSM…LTGL, IPAL…ALGV, LLIQ…PSIS, and ILFL…YVFV.

This sequence belongs to the ATPase A chain family. In terms of assembly, component of the ATP synthase complex composed at least of ATP5F1A/subunit alpha, ATP5F1B/subunit beta, ATP5MC1/subunit c (homooctomer), MT-ATP6/subunit a, MT-ATP8/subunit 8, ATP5ME/subunit e, ATP5MF/subunit f, ATP5MG/subunit g, ATP5MK/subunit k, ATP5MJ/subunit j, ATP5F1C/subunit gamma, ATP5F1D/subunit delta, ATP5F1E/subunit epsilon, ATP5PF/subunit F6, ATP5PB/subunit b, ATP5PD/subunit d, ATP5PO/subunit OSCP. ATP synthase complex consists of a soluble F(1) head domain (subunits alpha(3) and beta(3)) - the catalytic core - and a membrane F(0) domain - the membrane proton channel (subunits c, a, 8, e, f, g, k and j). These two domains are linked by a central stalk (subunits gamma, delta, and epsilon) rotating inside the F1 region and a stationary peripheral stalk (subunits F6, b, d, and OSCP). Interacts with DNAJC30; interaction is direct.

Its subcellular location is the mitochondrion inner membrane. It catalyses the reaction H(+)(in) = H(+)(out). Its function is as follows. Subunit a, of the mitochondrial membrane ATP synthase complex (F(1)F(0) ATP synthase or Complex V) that produces ATP from ADP in the presence of a proton gradient across the membrane which is generated by electron transport complexes of the respiratory chain. ATP synthase complex consist of a soluble F(1) head domain - the catalytic core - and a membrane F(1) domain - the membrane proton channel. These two domains are linked by a central stalk rotating inside the F(1) region and a stationary peripheral stalk. During catalysis, ATP synthesis in the catalytic domain of F(1) is coupled via a rotary mechanism of the central stalk subunits to proton translocation. With the subunit c (ATP5MC1), forms the proton-conducting channel in the F(0) domain, that contains two crucial half-channels (inlet and outlet) that facilitate proton movement from the mitochondrial intermembrane space (IMS) into the matrix. Protons are taken up via the inlet half-channel and released through the outlet half-channel, following a Grotthuss mechanism. This Gallus gallus (Chicken) protein is ATP synthase F(0) complex subunit a.